A 427-amino-acid polypeptide reads, in one-letter code: Serine--tRNA ligase (427 aa).

235-237 (TSE) contributes to the L-serine binding site. ATP is bound at residue 266–268 (RSE). Glutamate 289 is an L-serine binding site. 353–356 (EISS) serves as a coordination point for ATP. An L-serine-binding site is contributed by serine 388.

The protein belongs to the class-II aminoacyl-tRNA synthetase family. Type-1 seryl-tRNA synthetase subfamily. In terms of assembly, homodimer. The tRNA molecule binds across the dimer.

The protein localises to the cytoplasm. The catalysed reaction is tRNA(Ser) + L-serine + ATP = L-seryl-tRNA(Ser) + AMP + diphosphate + H(+). It carries out the reaction tRNA(Sec) + L-serine + ATP = L-seryl-tRNA(Sec) + AMP + diphosphate + H(+). The protein operates within aminoacyl-tRNA biosynthesis; selenocysteinyl-tRNA(Sec) biosynthesis; L-seryl-tRNA(Sec) from L-serine and tRNA(Sec): step 1/1. Its function is as follows. Catalyzes the attachment of serine to tRNA(Ser). Is also able to aminoacylate tRNA(Sec) with serine, to form the misacylated tRNA L-seryl-tRNA(Sec), which will be further converted into selenocysteinyl-tRNA(Sec). The sequence is that of Serine--tRNA ligase from Chromobacterium violaceum (strain ATCC 12472 / DSM 30191 / JCM 1249 / CCUG 213 / NBRC 12614 / NCIMB 9131 / NCTC 9757 / MK).